Consider the following 494-residue polypeptide: Hexokinase-2 (494 aa).

The 452-residue stretch at 32–483 (GRADAVLREL…SGIGAALLAA (452 aa)) folds into the Hexokinase domain. The segment at 87–225 (SGEEKGVFYA…GLDMKVTALI (139 aa)) is hexokinase small subdomain. Positions 101, 102, and 103 each coordinate ADP. The D-glucose site is built by Thr-191, Lys-192, Asn-226, and Asp-227. Positions 226 to 472 (NDTIGTLAGG…STIVIKLAKD (247 aa)) are hexokinase large subdomain. Thr-250 lines the ADP pocket. Positions 253, 281, and 312 each coordinate D-glucose. An ADP-binding site is contributed by Gly-437.

Belongs to the hexokinase family. As to expression, expressed in roots, leaves, flowers, immature seeds, endosperm and seed coat.

The enzyme catalyses a D-hexose + ATP = a D-hexose 6-phosphate + ADP + H(+). It carries out the reaction D-fructose + ATP = D-fructose 6-phosphate + ADP + H(+). It catalyses the reaction D-glucose + ATP = D-glucose 6-phosphate + ADP + H(+). It participates in carbohydrate metabolism; hexose metabolism. Its pathway is carbohydrate degradation; glycolysis; D-glyceraldehyde 3-phosphate and glycerone phosphate from D-glucose: step 1/4. In terms of biological role, fructose and glucose phosphorylating enzyme. The chain is Hexokinase-2 (HXK2) from Oryza sativa subsp. japonica (Rice).